The primary structure comprises 200 residues: NAD(P)H dehydrogenase (quinone) (200 aa).

The 188-residue stretch at 4–191 (VLVLYYSMYG…DIARFQGKHV (188 aa)) folds into the Flavodoxin-like domain. FMN-binding positions include 10-15 (SMYGHI) and 79-81 (TRF). Tyr12 lines the NAD(+) pocket. Residue Trp99 participates in substrate binding. Residues 114 to 120 (STGTQHG) and His135 each bind FMN.

It belongs to the WrbA family. FMN serves as cofactor.

It carries out the reaction a quinone + NADH + H(+) = a quinol + NAD(+). The catalysed reaction is a quinone + NADPH + H(+) = a quinol + NADP(+). The chain is NAD(P)H dehydrogenase (quinone) from Paraburkholderia phytofirmans (strain DSM 17436 / LMG 22146 / PsJN) (Burkholderia phytofirmans).